A 151-amino-acid polypeptide reads, in one-letter code: Small ribosomal subunit protein uS15 (151 aa).

This sequence belongs to the universal ribosomal protein uS15 family.

The polypeptide is Small ribosomal subunit protein uS15 (RpS13) (Spodoptera frugiperda (Fall armyworm)).